Here is a 201-residue protein sequence, read N- to C-terminus: Protein TV1384 (201 aa).

The AMMECR1 domain occupies 11 to 200; it reads DIGAKAVMLA…EIEPNGKVEQ (190 aa).

The polypeptide is Protein TV1384 (Thermoplasma volcanium (strain ATCC 51530 / DSM 4299 / JCM 9571 / NBRC 15438 / GSS1)).